Consider the following 195-residue polypeptide: Imidazoleglycerol-phosphate dehydratase (195 aa).

Belongs to the imidazoleglycerol-phosphate dehydratase family.

It is found in the cytoplasm. It carries out the reaction D-erythro-1-(imidazol-4-yl)glycerol 3-phosphate = 3-(imidazol-4-yl)-2-oxopropyl phosphate + H2O. It functions in the pathway amino-acid biosynthesis; L-histidine biosynthesis; L-histidine from 5-phospho-alpha-D-ribose 1-diphosphate: step 6/9. This is Imidazoleglycerol-phosphate dehydratase from Jannaschia sp. (strain CCS1).